The primary structure comprises 508 residues: tRNA (guanine(37)-N(1))-methyltransferase (508 aa).

A mitochondrion-targeting transit peptide spans 1–53 (MKFNFWKGLWKPKSLTPTLSHRLYRRMYTPQPPLNREMTVLDRSKFTVSLNLA). Histidine 253 is a binding site for S-adenosyl-L-methionine. The span at 267 to 284 (RERKQQERAKRENHEKST) shows a compositional bias: basic and acidic residues. The interval 267–291 (RERKQQERAKRENHEKSTETAVEPD) is disordered. Residues 323-324 (DL), 351-352 (DG), and asparagine 402 each bind S-adenosyl-L-methionine.

Belongs to the class I-like SAM-binding methyltransferase superfamily. TRM5/TYW2 family. Monomer.

It localises to the mitochondrion matrix. The protein resides in the nucleus. Its subcellular location is the cytoplasm. The catalysed reaction is guanosine(37) in tRNA + S-adenosyl-L-methionine = N(1)-methylguanosine(37) in tRNA + S-adenosyl-L-homocysteine + H(+). Specifically methylates the N1 position of guanosine-37 in various cytoplasmic and mitochondrial tRNAs. Methylation is not dependent on the nature of the nucleoside 5' of the target nucleoside. This is the first step in the biosynthesis of wybutosine (yW), a modified base adjacent to the anticodon of tRNAs and required for accurate decoding. In Yarrowia lipolytica (strain CLIB 122 / E 150) (Yeast), this protein is tRNA (guanine(37)-N(1))-methyltransferase.